A 60-amino-acid polypeptide reads, in one-letter code: Metallothionein (60 aa).

Residues 1–28 form a beta region; it reads MDPCDCAKTGTCNCGTSCTCANCSCTKC. The a divalent metal cation site is built by Cys4, Cys6, Cys12, Cys14, Cys18, Cys20, Cys23, Cys25, Cys28, Cys32, Cys33, Cys35, Cys36, Cys40, Cys43, Cys47, Cys49, Cys54, Cys58, and Cys59. The interval 29-60 is alpha; it reads KKSCCECCPSGCSKCASGCACKDKTCDTNCCQ.

The protein belongs to the metallothionein superfamily. Type 1 family.

Functionally, metallothioneins have a high content of cysteine residues that bind various heavy metals. This Gadus morhua (Atlantic cod) protein is Metallothionein (mt).